Reading from the N-terminus, the 629-residue chain is EF-hand calcium-binding domain-containing protein 7 (629 aa).

Residues 1–25 form a disordered region; the sequence is MAISPRSDATFSSQKSTPSESPRTK. Residues 7–21 are compositionally biased toward polar residues; sequence SDATFSSQKSTPSES. EF-hand domains lie at 102-137 and 138-173; these read TSKA…RGEK and MTRE…TNEQ. The disordered stretch occupies residues 195-229; sequence NHIEGSPERDPSPVPKPSPKITRKTDPETFLNKGD. S200 and S212 each carry phosphoserine. Residues 403–438 enclose the EF-hand 3 domain; that stretch reads EFKSTLSDIFEVIDLDGNGLLSLEEYNFFELRTSGE. The Ca(2+) site is built by D416, D418, N420, and E427.

As to quaternary structure, component of the EvC complex composed of EFCAB7, IQCE, EVC2 and EVC; built from two subcomplexes, EVC2:EVC and EFCAB7:IQCE. Interacts (via EF-hand 1 and 2) with IQCE (via N-terminus); this interaction anchors the EVC-EVC2 complex in a signaling microdomain at the base of cilia and stimulates the Hedgehog (Hh) pathway. Interacts with EVC2 (via N-terminal end). Interacts with EVC.

It localises to the cell projection. The protein localises to the cilium membrane. In terms of biological role, component of the EvC complex that positively regulates ciliary Hedgehog (Hh) signaling. Required for the localization of the EVC2:EVC subcomplex at the base of primary cilia. This is EF-hand calcium-binding domain-containing protein 7 (EFCAB7) from Homo sapiens (Human).